The chain runs to 389 residues: N-terminal EF-hand calcium-binding protein 2 (389 aa).

The residue at position 10 (Arg10) is an Omega-N-methylarginine. Position 42 is an asymmetric dimethylarginine (Arg42). EF-hand domains lie at 63 to 98 and 99 to 132; these read GGTAVILDIFRRADKNDDGKLSLEEFQLFFADGVLN and EKELEGLFHTIDSDNTNHVDTKELCDYFVEHMGD. 10 residues coordinate Ca(2+): Asp76, Asn78, Asp80, Lys82, Glu87, Asp110, Asp112, Thr114, His116, and Glu121. Residues 173 to 198 are a coiled coil; the sequence is LKETANQIQSLLSSVESAVEAIEEQT. The ABM domain occupies 289–377; that stretch reads QLVRQEMAVC…LSQPEALSQI (89 aa).

In terms of assembly, interacts (calcium-dependent) with ADORA2A and GRM5. Expressed in the iris, in the ciliary margin of the retina and in the inner portion of the neural retina. Expressed in the spinal dorsal horn with especially strong expression in lamina IIi; found in excitory synaptic boutons (at protein level).

Its subcellular location is the cytoplasm. The protein resides in the cell projection. It localises to the dendrite. It is found in the axon. The protein localises to the cell membrane. Functionally, may act as a signaling scaffold protein that senses intracellular calcium. Can modulate ligand-induced internalization of ADORA2A and coupling efficiency of mGluR5/GRM5; for both receptors may regulate signaling activity such as promoting MAPK1/3 (ERK1/2) activation. This Mus musculus (Mouse) protein is N-terminal EF-hand calcium-binding protein 2 (Necab2).